The primary structure comprises 232 residues: Orotidine 5'-phosphate decarboxylase (232 aa).

Residues D13, K35, 62–71 (DLKFHDIPNT), T121, R182, Q191, G211, and R212 each bind substrate. K64 (proton donor) is an active-site residue.

It belongs to the OMP decarboxylase family. Type 1 subfamily. In terms of assembly, homodimer.

The enzyme catalyses orotidine 5'-phosphate + H(+) = UMP + CO2. Its pathway is pyrimidine metabolism; UMP biosynthesis via de novo pathway; UMP from orotate: step 2/2. Functionally, catalyzes the decarboxylation of orotidine 5'-monophosphate (OMP) to uridine 5'-monophosphate (UMP). This Acinetobacter baumannii (strain AB0057) protein is Orotidine 5'-phosphate decarboxylase.